Reading from the N-terminus, the 265-residue chain is Phosphate import ATP-binding protein PstB 2 (265 aa).

In terms of domain architecture, ABC transporter spans phenylalanine 13–valine 260. ATP is bound at residue glycine 45–serine 52.

It belongs to the ABC transporter superfamily. Phosphate importer (TC 3.A.1.7) family. As to quaternary structure, the complex is composed of two ATP-binding proteins (PstB), two transmembrane proteins (PstC and PstA) and a solute-binding protein (PstS).

Its subcellular location is the cell inner membrane. The enzyme catalyses phosphate(out) + ATP + H2O = ADP + 2 phosphate(in) + H(+). Its function is as follows. Part of the ABC transporter complex PstSACB involved in phosphate import. Responsible for energy coupling to the transport system. This Synechococcus sp. (strain JA-2-3B'a(2-13)) (Cyanobacteria bacterium Yellowstone B-Prime) protein is Phosphate import ATP-binding protein PstB 2.